The sequence spans 299 residues: Protease HtpX homolog (299 aa).

Helical transmembrane passes span 5–25 (IFLFILTNILVITTIGIVLSV) and 44–64 (MVALLVFSAVVGFVGSFMSLA). H155 is a Zn(2+) binding site. E156 is an active-site residue. H159 is a binding site for Zn(2+). 2 helical membrane passes run 170-190 (LLQGIVNTFVVFLSRIAAWIA) and 205-225 (FIAVIVFQIIFSVLGSLVVFA). Zn(2+) is bound at residue E231.

This sequence belongs to the peptidase M48B family. The cofactor is Zn(2+).

Its subcellular location is the cell membrane. The chain is Protease HtpX homolog from Bacillus pumilus (strain SAFR-032).